A 513-amino-acid chain; its full sequence is ATP synthase subunit alpha (513 aa).

169–176 (GDRQTGKT) lines the ATP pocket.

It belongs to the ATPase alpha/beta chains family. In terms of assembly, F-type ATPases have 2 components, CF(1) - the catalytic core - and CF(0) - the membrane proton channel. CF(1) has five subunits: alpha(3), beta(3), gamma(1), delta(1), epsilon(1). CF(0) has three main subunits: a(1), b(2) and c(9-12). The alpha and beta chains form an alternating ring which encloses part of the gamma chain. CF(1) is attached to CF(0) by a central stalk formed by the gamma and epsilon chains, while a peripheral stalk is formed by the delta and b chains.

The protein resides in the cell inner membrane. The enzyme catalyses ATP + H2O + 4 H(+)(in) = ADP + phosphate + 5 H(+)(out). In terms of biological role, produces ATP from ADP in the presence of a proton gradient across the membrane. The alpha chain is a regulatory subunit. The protein is ATP synthase subunit alpha of Shewanella sp. (strain MR-4).